The following is a 383-amino-acid chain: Paralemmin-1 (383 aa).

Methionine 1 carries the N-acetylmethionine modification. Residues 5 to 102 (ATDTASQQER…KEIDVLEFGE (98 aa)) are a coiled coil. Disordered stretches follow at residues 51–163 (RERW…GSTM), 242–295 (TLSE…GQEP), and 334–375 (ATPR…MKKP). Basic and acidic residues predominate over residues 69-96 (DMRKQMQEDEQKARGLEESITRLEKEID). 2 stretches are compositionally biased toward polar residues: residues 109 to 124 (KENS…QSAS) and 133 to 143 (ETLVNAQQTPL). Phosphoserine is present on residues serine 116, serine 122, and serine 124. 3 positions are modified to phosphothreonine: threonine 141, threonine 145, and threonine 153. Residues serine 157 and serine 161 each carry the phosphoserine modification. A Phosphothreonine modification is found at threonine 242. At serine 244 the chain carries Phosphoserine. The span at 257 to 273 (GLAEDVTRTTPSRREIT) shows a compositional bias: basic and acidic residues. The span at 285–295 (GPPGIQPGQEP) shows a compositional bias: low complexity. Residue serine 345 is modified to Phosphoserine. Residues 357 to 367 (QTGPTTTPSDT) are compositionally biased toward polar residues. Threonine 361, threonine 362, and threonine 363 each carry phosphothreonine. At serine 365 the chain carries Phosphoserine. Position 367 is a phosphothreonine (threonine 367). 2 S-palmitoyl cysteine lipidation sites follow: cysteine 377 and cysteine 379. Position 380 is a cysteine methyl ester (cysteine 380). Cysteine 380 is lipidated: S-farnesyl cysteine. The propeptide at 381 to 383 (SVM) is removed in mature form.

It belongs to the paralemmin family. In terms of assembly, interacts with dopamine receptor DRD3. Expression is highest in brain, intermediate in adrenal gland and kidney, and much lower or undetectable in other tissues. Isoform 1 is the predominant isoform in most tissues except brain and kidney where isoform 2 predominates.

It localises to the cell membrane. The protein resides in the cell projection. It is found in the filopodium membrane. Its subcellular location is the axon. The protein localises to the dendrite. It localises to the dendritic spine. The protein resides in the basolateral cell membrane. It is found in the apicolateral cell membrane. In terms of biological role, involved in plasma membrane dynamics and cell process formation. Isoform 1 and isoform 2 are necessary for axonal and dendritic filopodia induction, for dendritic spine maturation and synapse formation in a palmitoylation-dependent manner. This Mus musculus (Mouse) protein is Paralemmin-1 (Palm).